A 338-amino-acid polypeptide reads, in one-letter code: Ketol-acid reductoisomerase (NADP(+)) (338 aa).

Residues Met-1 to Thr-181 form the KARI N-terminal Rossmann domain. NADP(+) contacts are provided by residues Tyr-24–Gln-27, Arg-47, and Ser-52. His-107 is an active-site residue. An NADP(+)-binding site is contributed by Gly-133. The KARI C-terminal knotted domain occupies Asn-182–Ile-327. 4 residues coordinate Mg(2+): Asp-190, Glu-194, Glu-226, and Glu-230. Ser-251 contacts substrate.

Belongs to the ketol-acid reductoisomerase family. Requires Mg(2+) as cofactor.

It carries out the reaction (2R)-2,3-dihydroxy-3-methylbutanoate + NADP(+) = (2S)-2-acetolactate + NADPH + H(+). The enzyme catalyses (2R,3R)-2,3-dihydroxy-3-methylpentanoate + NADP(+) = (S)-2-ethyl-2-hydroxy-3-oxobutanoate + NADPH + H(+). Its pathway is amino-acid biosynthesis; L-isoleucine biosynthesis; L-isoleucine from 2-oxobutanoate: step 2/4. The protein operates within amino-acid biosynthesis; L-valine biosynthesis; L-valine from pyruvate: step 2/4. In terms of biological role, involved in the biosynthesis of branched-chain amino acids (BCAA). Catalyzes an alkyl-migration followed by a ketol-acid reduction of (S)-2-acetolactate (S2AL) to yield (R)-2,3-dihydroxy-isovalerate. In the isomerase reaction, S2AL is rearranged via a Mg-dependent methyl migration to produce 3-hydroxy-3-methyl-2-ketobutyrate (HMKB). In the reductase reaction, this 2-ketoacid undergoes a metal-dependent reduction by NADPH to yield (R)-2,3-dihydroxy-isovalerate. This Cupriavidus necator (strain ATCC 17699 / DSM 428 / KCTC 22496 / NCIMB 10442 / H16 / Stanier 337) (Ralstonia eutropha) protein is Ketol-acid reductoisomerase (NADP(+)).